We begin with the raw amino-acid sequence, 235 residues long: Sperm annulus positionning complex subunit Chibby3 (235 aa).

A disordered region spans residues Met-1–Thr-41. Low complexity predominate over residues Ser-14–Pro-32. The interval Leu-167 to Leu-181 is leucine-zipper; mediates homodimerization.

Belongs to the chibby family. As to quaternary structure, homodimer. Interacts with CIBAR1 (via BAR-like domain); both proteins form a ninefold symmetric structure at the flagellar base; are recruited to the annulus in a mutually dependent manner and regulate annulus positionning. As to expression, testis-specific.

It is found in the cell projection. The protein localises to the cilium. It localises to the flagellum. Plays a key role in the correct positioning of the annulus, a septin-based ring strucure in the sperm flagellum, serving both as a physical barrier and a membrane diffusion barrier that separates the midpiece (MP) from the principal piece (PP). This positioning is essential for proper sperm motility and function. Interacts with CIBAR1 to form a complex which localizes to the curved membrane region of the flagellar pocket. By doing so, may provide stability and rigidity to the periannular membrane to prevent membrane deformation. This function is crucial for halting annulus migration at the proximal end of the fibrous sheath-containing PP. The sequence is that of Sperm annulus positionning complex subunit Chibby3 (Cby3) from Mus musculus (Mouse).